Consider the following 22-residue polypeptide: Caerin-3.1 (22 aa).

Lys-22 is subject to Lysine amide.

The protein belongs to the frog skin active peptide (FSAP) family. Caerin subfamily. Expressed by the skin dorsal glands.

The protein localises to the secreted. Its function is as follows. Antibacterial peptide with narrow spectrum of activity. Inhibits the formation of NO by neuronal nitric oxide synthase. In Litoria rothii (Roth's tree frog), this protein is Caerin-3.1.